Reading from the N-terminus, the 655-residue chain is Probable alpha-galactosidase D (655 aa).

Residues 1-16 form the signal peptide; the sequence is MASVIALSLLLPAAFA. N87 and N93 each carry an N-linked (GlcNAc...) asparagine glycan. C126 and C153 are oxidised to a cystine. The Nucleophile role is filled by D151. 196–200 contacts substrate; sequence EWGID. Catalysis depends on D218, which acts as the Proton donor. Residues N432, N482, N502, N540, and N579 are each glycosylated (N-linked (GlcNAc...) asparagine).

This sequence belongs to the glycosyl hydrolase 27 family.

It localises to the secreted. The catalysed reaction is Hydrolysis of terminal, non-reducing alpha-D-galactose residues in alpha-D-galactosides, including galactose oligosaccharides, galactomannans and galactolipids.. Its function is as follows. Hydrolyzes a variety of simple alpha-D-galactoside as well as more complex molecules such as oligosaccharides and polysaccharides. This is Probable alpha-galactosidase D (aglD) from Aspergillus terreus (strain NIH 2624 / FGSC A1156).